Consider the following 50-residue polypeptide: U37-theraphotoxin-Cg1b (50 aa).

Positions 1-19 (MRVLLIIAGLALLSVVCYT) are cleaved as a signal peptide.

It belongs to the neurotoxin 10 (Hwtx-1) family. 67 (Jztx-67) subfamily. As to expression, expressed by the venom gland.

The protein resides in the secreted. The protein is U37-theraphotoxin-Cg1b of Chilobrachys guangxiensis (Chinese earth tiger tarantula).